Here is a 424-residue protein sequence, read N- to C-terminus: Tol-Pal system protein TolB (424 aa).

Positions methionine 1–alanine 24 are cleaved as a signal peptide.

The protein belongs to the TolB family. In terms of assembly, the Tol-Pal system is composed of five core proteins: the inner membrane proteins TolA, TolQ and TolR, the periplasmic protein TolB and the outer membrane protein Pal. They form a network linking the inner and outer membranes and the peptidoglycan layer.

The protein resides in the periplasm. In terms of biological role, part of the Tol-Pal system, which plays a role in outer membrane invagination during cell division and is important for maintaining outer membrane integrity. In Methylococcus capsulatus (strain ATCC 33009 / NCIMB 11132 / Bath), this protein is Tol-Pal system protein TolB.